The sequence spans 243 residues: Orotidine 5'-phosphate decarboxylase (243 aa).

Substrate contacts are provided by residues D19, K41, 69–78, T124, R185, Q194, G214, and R215; that span reads DLKFFDIPAT. Catalysis depends on K71, which acts as the Proton donor.

Belongs to the OMP decarboxylase family. Type 1 subfamily. As to quaternary structure, homodimer.

The catalysed reaction is orotidine 5'-phosphate + H(+) = UMP + CO2. It functions in the pathway pyrimidine metabolism; UMP biosynthesis via de novo pathway; UMP from orotate: step 2/2. In terms of biological role, catalyzes the decarboxylation of orotidine 5'-monophosphate (OMP) to uridine 5'-monophosphate (UMP). The chain is Orotidine 5'-phosphate decarboxylase from Xanthomonas campestris pv. campestris (strain 8004).